We begin with the raw amino-acid sequence, 537 residues long: Actin-histidine N-methyltransferase (537 aa).

Residues 1–12 (MGKNTKRNKKTK) show a composition bias toward basic residues. The interval 1–50 (MGKNTKRNKKTKQQQQQPQQNGVTASASGTAVEDFEDQQAASSLPSLNGK) is disordered. S-adenosyl-L-methionine contacts are provided by residues arginine 114, 143–145 (YQL), arginine 299, 325–329 (DMANH), and 375–377 (NGF). An SET domain is found at 133-364 (EGLEIAIFPG…TGEQFFIYYG (232 aa)).

This sequence belongs to the class V-like SAM-binding methyltransferase superfamily. SETD3 actin-histidine methyltransferase family.

The protein resides in the cytoplasm. It localises to the nucleus. The catalysed reaction is L-histidyl-[protein] + S-adenosyl-L-methionine = N(tele)-methyl-L-histidyl-[protein] + S-adenosyl-L-homocysteine + H(+). In terms of biological role, protein-histidine N-methyltransferase that specifically mediates 3-methylhistidine (tele-methylhistidine) methylation of actin at 'His-74'. The polypeptide is Actin-histidine N-methyltransferase (Drosophila melanogaster (Fruit fly)).